The chain runs to 228 residues: 7-cyano-7-deazaguanine synthase (228 aa).

9–19 (YSGGLDSTTCM) provides a ligand contact to ATP. C189, C199, C202, and C205 together coordinate Zn(2+).

This sequence belongs to the QueC family. Requires Zn(2+) as cofactor.

It catalyses the reaction 7-carboxy-7-deazaguanine + NH4(+) + ATP = 7-cyano-7-deazaguanine + ADP + phosphate + H2O + H(+). Its pathway is purine metabolism; 7-cyano-7-deazaguanine biosynthesis. In terms of biological role, catalyzes the ATP-dependent conversion of 7-carboxy-7-deazaguanine (CDG) to 7-cyano-7-deazaguanine (preQ(0)). The protein is 7-cyano-7-deazaguanine synthase of Geotalea uraniireducens (strain Rf4) (Geobacter uraniireducens).